A 51-amino-acid chain; its full sequence is Large ribosomal subunit protein eL39 (51 aa).

It belongs to the eukaryotic ribosomal protein eL39 family.

This is Large ribosomal subunit protein eL39 (rpl39e) from Thermoplasma acidophilum (strain ATCC 25905 / DSM 1728 / JCM 9062 / NBRC 15155 / AMRC-C165).